The chain runs to 343 residues: S-adenosylmethionine:tRNA ribosyltransferase-isomerase (343 aa).

Belongs to the QueA family. As to quaternary structure, monomer.

The protein resides in the cytoplasm. It carries out the reaction 7-aminomethyl-7-carbaguanosine(34) in tRNA + S-adenosyl-L-methionine = epoxyqueuosine(34) in tRNA + adenine + L-methionine + 2 H(+). It functions in the pathway tRNA modification; tRNA-queuosine biosynthesis. Transfers and isomerizes the ribose moiety from AdoMet to the 7-aminomethyl group of 7-deazaguanine (preQ1-tRNA) to give epoxyqueuosine (oQ-tRNA). The protein is S-adenosylmethionine:tRNA ribosyltransferase-isomerase of Dehalococcoides mccartyi (strain ATCC BAA-2100 / JCM 16839 / KCTC 5957 / BAV1).